A 338-amino-acid chain; its full sequence is Phenylalanine--tRNA ligase alpha subunit (338 aa).

Residue Glu-253 participates in Mg(2+) binding.

It belongs to the class-II aminoacyl-tRNA synthetase family. Phe-tRNA synthetase alpha subunit type 1 subfamily. In terms of assembly, tetramer of two alpha and two beta subunits. Mg(2+) is required as a cofactor.

The protein resides in the cytoplasm. It catalyses the reaction tRNA(Phe) + L-phenylalanine + ATP = L-phenylalanyl-tRNA(Phe) + AMP + diphosphate + H(+). This is Phenylalanine--tRNA ligase alpha subunit from Trichlorobacter lovleyi (strain ATCC BAA-1151 / DSM 17278 / SZ) (Geobacter lovleyi).